The sequence spans 110 residues: Coiled-coil-helix-coiled-coil-helix domain-containing protein 5 (110 aa).

N-acetylmethionine is present on Met1. 2 CHCH domains span residues 9 to 52 (ARYC…PIIR) and 55 to 97 (RQAC…QPPR). 4 consecutive short sequence motifs (cx9C motif) follow at residues 12-22 (CGRELEQYGQC), 34-44 (CHYLKMSIAQC), 58-68 (CAQPFEAFEEC), and 79-89 (CAEHMRRFLQC). 4 disulfide bridges follow: Cys12–Cys44, Cys22–Cys34, Cys58–Cys89, and Cys68–Cys79.

Monomer.

The protein resides in the mitochondrion intermembrane space. The protein is Coiled-coil-helix-coiled-coil-helix domain-containing protein 5 (CHCHD5) of Homo sapiens (Human).